Consider the following 393-residue polypeptide: Lipid-A-disaccharide synthase (393 aa).

The protein belongs to the LpxB family.

It carries out the reaction a lipid X + a UDP-2-N,3-O-bis[(3R)-3-hydroxyacyl]-alpha-D-glucosamine = a lipid A disaccharide + UDP + H(+). The protein operates within bacterial outer membrane biogenesis; LPS lipid A biosynthesis. In terms of biological role, condensation of UDP-2,3-diacylglucosamine and 2,3-diacylglucosamine-1-phosphate to form lipid A disaccharide, a precursor of lipid A, a phosphorylated glycolipid that anchors the lipopolysaccharide to the outer membrane of the cell. This is Lipid-A-disaccharide synthase from Rhodopseudomonas palustris (strain HaA2).